The following is a 299-amino-acid chain: UDP-N-acetylenolpyruvoylglucosamine reductase (299 aa).

The FAD-binding PCMH-type domain maps to 29-193 (RIGGPAEIFL…TAASLRFRKA (165 aa)). Residue Arg-173 is part of the active site. Ser-222 (proton donor) is an active-site residue. The active site involves Glu-292.

This sequence belongs to the MurB family. The cofactor is FAD.

The protein localises to the cytoplasm. It carries out the reaction UDP-N-acetyl-alpha-D-muramate + NADP(+) = UDP-N-acetyl-3-O-(1-carboxyvinyl)-alpha-D-glucosamine + NADPH + H(+). Its pathway is cell wall biogenesis; peptidoglycan biosynthesis. Its function is as follows. Cell wall formation. The protein is UDP-N-acetylenolpyruvoylglucosamine reductase of Syntrophotalea carbinolica (strain DSM 2380 / NBRC 103641 / GraBd1) (Pelobacter carbinolicus).